Here is a 310-residue protein sequence, read N- to C-terminus: Aspartate carbamoyltransferase catalytic subunit (310 aa).

Arg-54 and Thr-55 together coordinate carbamoyl phosphate. Lys-84 lines the L-aspartate pocket. Carbamoyl phosphate-binding residues include Arg-105, His-134, and Gln-137. L-aspartate-binding residues include Arg-167 and Arg-229. Carbamoyl phosphate-binding residues include Leu-267 and Pro-268.

This sequence belongs to the aspartate/ornithine carbamoyltransferase superfamily. ATCase family. In terms of assembly, heterododecamer (2C3:3R2) of six catalytic PyrB chains organized as two trimers (C3), and six regulatory PyrI chains organized as three dimers (R2).

The enzyme catalyses carbamoyl phosphate + L-aspartate = N-carbamoyl-L-aspartate + phosphate + H(+). The protein operates within pyrimidine metabolism; UMP biosynthesis via de novo pathway; (S)-dihydroorotate from bicarbonate: step 2/3. In terms of biological role, catalyzes the condensation of carbamoyl phosphate and aspartate to form carbamoyl aspartate and inorganic phosphate, the committed step in the de novo pyrimidine nucleotide biosynthesis pathway. The chain is Aspartate carbamoyltransferase catalytic subunit from Enterobacter sp. (strain 638).